Here is a 686-residue protein sequence, read N- to C-terminus: Translation initiation factor IF-2 (686 aa).

The tract at residues 54–105 (KPSVADEFEVEEKVVRSKKNSNKKKKKGKGNEDKRQENFAGRQQTQTVETPD) is disordered. The span at 69–81 (RSKKNSNKKKKKG) shows a compositional bias: basic residues. In terms of domain architecture, tr-type G spans 188–357 (ERPAVVTIMG…LLVSEVEEYK (170 aa)). The tract at residues 197–204 (GHVDHGKT) is G1. 197 to 204 (GHVDHGKT) contributes to the GTP binding site. The segment at 222 to 226 (GITQH) is G2. A G3 region spans residues 243–246 (DTPG). Residues 243 to 247 (DTPGH) and 297 to 300 (NKMD) each bind GTP. The G4 stretch occupies residues 297 to 300 (NKMD). The tract at residues 333 to 335 (SAI) is G5.

Belongs to the TRAFAC class translation factor GTPase superfamily. Classic translation factor GTPase family. IF-2 subfamily.

The protein resides in the cytoplasm. One of the essential components for the initiation of protein synthesis. Protects formylmethionyl-tRNA from spontaneous hydrolysis and promotes its binding to the 30S ribosomal subunits. Also involved in the hydrolysis of GTP during the formation of the 70S ribosomal complex. This chain is Translation initiation factor IF-2, found in Bacillus cereus (strain 03BB102).